A 435-amino-acid chain; its full sequence is 5-hydroxybenzimidazole synthase (435 aa).

Residues M95, Y124, H163, 186–188, 227–230, and E266 contribute to the substrate site; these read SKG and NGLR. H270 contacts Zn(2+). Y293 is a binding site for substrate. Position 334 (H334) interacts with Zn(2+). [4Fe-4S] cluster is bound by residues C410, C413, and C417.

It belongs to the ThiC family. 5-hydroxybenzimidazole synthase subfamily. Homodimer. It depends on [4Fe-4S] cluster as a cofactor.

It carries out the reaction 5-amino-1-(5-phospho-beta-D-ribosyl)imidazole + AH2 + S-adenosyl-L-methionine = 5-hydroxybenzimidazole + 5'-deoxyadenosine + formate + L-methionine + A + NH4(+) + phosphate + 2 H(+). Catalyzes the conversion of aminoimidazole ribotide (AIR) to 5-hydroxybenzimidazole (5-HBI) in a radical S-adenosyl-L-methionine (SAM)-dependent reaction. Is thus involved in the anaerobic biosynthesis of the benzimidazole lower axial ligand of the cobamide produced by G.metallireducens. The sequence is that of 5-hydroxybenzimidazole synthase from Geobacter metallireducens (strain ATCC 53774 / DSM 7210 / GS-15).